The primary structure comprises 140 residues: Large ribosomal subunit protein mL43 (140 aa).

The protein belongs to the mitochondrion-specific ribosomal protein mL43 family. In terms of assembly, component of the mitochondrial large ribosomal subunit (mt-LSU). Mature yeast 74S mitochondrial ribosomes consist of a small (37S) and a large (54S) subunit. The 37S small subunit contains a 15S ribosomal RNA (15S mt-rRNA) and 34 different proteins. The 54S large subunit contains a 21S rRNA (21S mt-rRNA) and 46 different proteins.

It localises to the mitochondrion. In terms of biological role, component of the mitochondrial ribosome (mitoribosome), a dedicated translation machinery responsible for the synthesis of mitochondrial genome-encoded proteins, including at least some of the essential transmembrane subunits of the mitochondrial respiratory chain. The mitoribosomes are attached to the mitochondrial inner membrane and translation products are cotranslationally integrated into the membrane. Also has an extraribosomal function, being essential for mitochondrial genome integrity. May interact with MHR1 to take part in the mtDNA repair mechanism. The chain is Large ribosomal subunit protein mL43 (MRPL51) from Saccharomyces cerevisiae (strain ATCC 204508 / S288c) (Baker's yeast).